The sequence spans 275 residues: Large ribosomal subunit protein uL2 (275 aa).

Disordered stretches follow at residues 1 to 55 (MGIR…RHRG) and 218 to 275 (PHVR…RRRR). Over residues 259-275 (TRNKKKASSRLIVRRRR) the composition is skewed to basic residues.

The protein belongs to the universal ribosomal protein uL2 family. As to quaternary structure, part of the 50S ribosomal subunit. Forms a bridge to the 30S subunit in the 70S ribosome.

Its function is as follows. One of the primary rRNA binding proteins. Required for association of the 30S and 50S subunits to form the 70S ribosome, for tRNA binding and peptide bond formation. It has been suggested to have peptidyltransferase activity; this is somewhat controversial. Makes several contacts with the 16S rRNA in the 70S ribosome. The sequence is that of Large ribosomal subunit protein uL2 from Crocosphaera subtropica (strain ATCC 51142 / BH68) (Cyanothece sp. (strain ATCC 51142)).